The sequence spans 1032 residues: Caspase recruitment domain-containing protein 10 (1032 aa).

3 disordered regions span residues 1 to 23 (MPGRAEAGEAEEEAGAGSGSEAE), 253 to 276 (RARGPPPGAEEKEKEKEKEKEPDN), and 481 to 553 (EFPS…MSDI). Residue Ser18 is modified to Phosphoserine. The CARD domain occupies 23-115 (EEDALWERIE…EHFTLLTGQE (93 aa)). Residues 138 to 456 (TEVRRLREAR…LEVQLQRAQG (319 aa)) adopt a coiled-coil conformation. Composition is skewed to basic and acidic residues over residues 261–276 (AEEKEKEKEKEKEPDN) and 504–517 (HNSEEATDSEKEIN).

CARD10 and BCL10 bind to each other by CARD-CARD interaction. They both participate in a complex with MALT1, where MALT1 binds to BCL10. Interacts with TMEM43; this interaction is essential for EGFR-mediated NF-kappa-B activation. As to expression, detected in adult heart, kidney and liver; lower levels in intestine, placenta, muscle and lung. Also found in fetal lung, liver and kidney.

The protein resides in the cytoplasm. Scaffold protein that plays an important role in mediating the activation of NF-kappa-B via BCL10 or EGFR. The protein is Caspase recruitment domain-containing protein 10 (CARD10) of Homo sapiens (Human).